Here is a 342-residue protein sequence, read N- to C-terminus: S-adenosylmethionine:tRNA ribosyltransferase-isomerase (342 aa).

It belongs to the QueA family. Monomer.

It localises to the cytoplasm. It carries out the reaction 7-aminomethyl-7-carbaguanosine(34) in tRNA + S-adenosyl-L-methionine = epoxyqueuosine(34) in tRNA + adenine + L-methionine + 2 H(+). Its pathway is tRNA modification; tRNA-queuosine biosynthesis. In terms of biological role, transfers and isomerizes the ribose moiety from AdoMet to the 7-aminomethyl group of 7-deazaguanine (preQ1-tRNA) to give epoxyqueuosine (oQ-tRNA). This is S-adenosylmethionine:tRNA ribosyltransferase-isomerase from Bacillus velezensis (strain DSM 23117 / BGSC 10A6 / LMG 26770 / FZB42) (Bacillus amyloliquefaciens subsp. plantarum).